The sequence spans 711 residues: DNA topoisomerase 3 (711 aa).

Residues 2–135 (KSLILAEKPS…LRRLWISSVT (134 aa)) enclose the Toprim domain. Mg(2+) contacts are provided by Glu-8 and Asp-104. The Topo IA-type catalytic domain maps to 152 to 580 (YNDLYYAALA…EMKDFTKDVV (429 aa)). Residues 186-191 (SLGRVQ) form an interaction with DNA region. Tyr-305 (O-(5'-phospho-DNA)-tyrosine intermediate) is an active-site residue. The segment at 691–711 (MNKNEGLDNNPFKDALKNLNL) is disordered.

This sequence belongs to the type IA topoisomerase family. The cofactor is Mg(2+).

It carries out the reaction ATP-independent breakage of single-stranded DNA, followed by passage and rejoining.. Functionally, releases the supercoiling and torsional tension of DNA, which is introduced during the DNA replication and transcription, by transiently cleaving and rejoining one strand of the DNA duplex. Introduces a single-strand break via transesterification at a target site in duplex DNA. The scissile phosphodiester is attacked by the catalytic tyrosine of the enzyme, resulting in the formation of a DNA-(5'-phosphotyrosyl)-enzyme intermediate and the expulsion of a 3'-OH DNA strand. The free DNA strand then undergoes passage around the unbroken strand, thus removing DNA supercoils. Finally, in the religation step, the DNA 3'-OH attacks the covalent intermediate to expel the active-site tyrosine and restore the DNA phosphodiester backbone. This Staphylococcus aureus (strain MRSA252) protein is DNA topoisomerase 3.